The following is a 117-amino-acid chain: Acidic phospholipase A2 (117 aa).

7 disulfide bridges follow: Cys-11–Cys-70, Cys-25–Cys-116, Cys-27–Cys-43, Cys-42–Cys-98, Cys-49–Cys-91, Cys-59–Cys-84, and Cys-77–Cys-89. Ca(2+)-binding residues include Tyr-26, Gly-28, and Gly-30. His-46 is a catalytic residue. Ca(2+) is bound at residue Asp-47. The N-linked (GlcNAc...) asparagine glycan is linked to Asn-80. The active site involves Asp-92.

Ca(2+) is required as a cofactor. Expressed by the venom gland.

The protein resides in the secreted. It carries out the reaction a 1,2-diacyl-sn-glycero-3-phosphocholine + H2O = a 1-acyl-sn-glycero-3-phosphocholine + a fatty acid + H(+). Functionally, snake venom phospholipase A2 (PLA2) that shows strong myotoxicity and induces edema in mice. Shows no cytotoxicity in vitro. Has a strong anticoagulant effect in vitro. PLA2 catalyzes the calcium-dependent hydrolysis of the 2-acyl groups in 3-sn-phosphoglycerides. The sequence is that of Acidic phospholipase A2 from Micrurus dumerilii (Coral snake).